A 533-amino-acid polypeptide reads, in one-letter code: Adenylate kinase 7 (533 aa).

Positions 177–426 (PVKICILGPP…EPRNYGLTDE (250 aa)) are adenylate kinase. 187–192 (AVGKSS) contributes to the ATP binding site. Residues 207-265 (QLKDVISEAIAKLETIVAPKDIGEGKEEVEEEEEEENVEDAQELLDGIKESMEQNAGQL) are NMP. AMP contacts are provided by residues 242 to 265 (ENVEDAQELLDGIKESMEQNAGQL), 292 to 295 (GFPK), and Gln299. The tract at residues 347-357 (NLPERIVAGTH) is LID. Residue Arg365 participates in AMP binding. Gly397 is an ATP binding site. Positions 419-487 (RNYGLTDEEK…EERELLEAQS (69 aa)) form a coiled coil. The interval 489 to 533 (PLRNYLMTYVMPTLIQGLNECCNVRPEDPVDFLAEYLFKNNPEAQ) is DPY-30.

This sequence in the central section; belongs to the adenylate kinase family. The protein in the C-terminal section; belongs to the dpy-30 family.

Its subcellular location is the cytoplasm. The protein localises to the cytosol. It is found in the cell projection. It localises to the cilium. The protein resides in the flagellum. The enzyme catalyses AMP + ATP = 2 ADP. The catalysed reaction is a 2'-deoxyribonucleoside 5'-diphosphate + ATP = a 2'-deoxyribonucleoside 5'-triphosphate + ADP. It catalyses the reaction a ribonucleoside 5'-diphosphate + ATP = a ribonucleoside 5'-triphosphate + ADP. In terms of biological role, nucleoside monophosphate (NMP) kinase that catalyzes the reversible transfer of the terminal phosphate group between nucleoside triphosphates and monophosphates. Has highest activity toward AMP, and weaker activity toward dAMP, CMP and dCMP. Also displays broad nucleoside diphosphate kinase activity. Involved in maintaining ciliary structure and function. The polypeptide is Adenylate kinase 7 (AK7) (Macaca fascicularis (Crab-eating macaque)).